The following is a 66-amino-acid chain: Moricin-2 (66 aa).

Residues 1–24 (MNILKLFFVFIVAMSLVSCSTAAP) form the signal peptide.

Expressed in fat body and to a lesser extent in hemocyte and Malpighian tubules.

The protein localises to the secreted. In terms of biological role, has antibacterial activity against Gram-positive and Gram-negative bacteria. Probably acts by disturbing membrane functions with its amphipathic structure. This Bombyx mori (Silk moth) protein is Moricin-2 (MOR2).